The following is a 195-amino-acid chain: GRF1-interacting factor 2 (195 aa).

The disordered stretch occupies residues 166–195; that stretch reads QQPETGLGGNVGLRGGKQDGADGQGKDDGK. Gly residues predominate over residues 171 to 180; that stretch reads GLGGNVGLRG. A compositionally biased stretch (basic and acidic residues) spans 181–195; sequence GKQDGADGQGKDDGK.

It belongs to the SS18 family. In terms of assembly, interacts with GRF1. As to expression, predominantly expressed in shoot tips containing the shoot apical meristem (SAM) and flower buds. Also expressed in mature flowers.

Its function is as follows. Transcription coactivator that plays a role in the regulation of cell expansion in leaf and cotyledons tissues. Component of a network formed by miR396, the GRFs and their interacting factors (GIFs) acting in the regulation of meristem function, at least partially through the control of cell proliferation. GIFs are involved in the positive regulation of cell proliferation of lateral organs in a functionally redundant manner. The protein is GRF1-interacting factor 2 (GIF2) of Arabidopsis thaliana (Mouse-ear cress).